The following is a 62-amino-acid chain: Large ribosomal subunit protein bL28 (62 aa).

Residues 1 to 27 form a disordered region; the sequence is MARKCVVTGRQTRSGNQRSHAMNSNKR. Residues 9-26 are compositionally biased toward polar residues; the sequence is GRQTRSGNQRSHAMNSNK.

The protein belongs to the bacterial ribosomal protein bL28 family.

The sequence is that of Large ribosomal subunit protein bL28 from Oceanobacillus iheyensis (strain DSM 14371 / CIP 107618 / JCM 11309 / KCTC 3954 / HTE831).